Consider the following 396-residue polypeptide: Acetate kinase (396 aa).

Asn8 lines the Mg(2+) pocket. Position 15 (Lys15) interacts with ATP. Residue Arg89 coordinates substrate. Asp146 acts as the Proton donor/acceptor in catalysis. Residues 206–210 (HIGNG), 283–285 (DMR), and 331–335 (GVGEN) contribute to the ATP site. Residue Glu383 participates in Mg(2+) binding.

Belongs to the acetokinase family. As to quaternary structure, homodimer. Mg(2+) serves as cofactor. The cofactor is Mn(2+).

Its subcellular location is the cytoplasm. The catalysed reaction is acetate + ATP = acetyl phosphate + ADP. Its pathway is metabolic intermediate biosynthesis; acetyl-CoA biosynthesis; acetyl-CoA from acetate: step 1/2. Catalyzes the formation of acetyl phosphate from acetate and ATP. Can also catalyze the reverse reaction. This is Acetate kinase from Streptococcus pneumoniae serotype 2 (strain D39 / NCTC 7466).